The sequence spans 259 residues: tRNA (guanine-N(7)-)-methyltransferase (259 aa).

Residues Gly-80, 103–104, 136–137, and Leu-156 each bind S-adenosyl-L-methionine; these read EL and NS. Asp-159 is an active-site residue. 234–236 contacts S-adenosyl-L-methionine; sequence TEE.

The protein belongs to the class I-like SAM-binding methyltransferase superfamily. TrmB family.

It localises to the nucleus. The enzyme catalyses guanosine(46) in tRNA + S-adenosyl-L-methionine = N(7)-methylguanosine(46) in tRNA + S-adenosyl-L-homocysteine. It participates in tRNA modification; N(7)-methylguanine-tRNA biosynthesis. Its function is as follows. Catalyzes the formation of N(7)-methylguanine at position 46 (m7G46) in tRNA. The sequence is that of tRNA (guanine-N(7)-)-methyltransferase from Oryza sativa subsp. indica (Rice).